A 116-amino-acid polypeptide reads, in one-letter code: Immunoglobulin heavy variable 2-4 (116 aa).

Residues 1 to 19 (MAVLVLLFCLVTFPSCVLS) form the signal peptide. The 97-residue stretch at 20-116 (QVQLKQSGPG…DDTAIYYCAK (97 aa)) folds into the Ig-like domain. Cys-41 and Cys-114 form a disulfide bridge.

The chain is Immunoglobulin heavy variable 2-4 from Mus musculus (Mouse).